Here is a 189-residue protein sequence, read N- to C-terminus: Mitochondrial FAD-linked sulfhydryl oxidase ERV1 (189 aa).

In terms of domain architecture, ERV/ALR sulfhydryl oxidase spans 83–183 (DPPDVEQLGR…FDCNFWEKRW (101 aa)). FAD contacts are provided by residues 88-95 (EQLGRSSW), H99, and Y128. 2 cysteine pairs are disulfide-bonded: C130/C133 and C159/C176. FAD contacts are provided by residues 159 to 171 (CEAHNKVNKKLRK) and 182 to 183 (RW).

As to quaternary structure, homodimer. Interacts with MIA40, forming transient intermolecular disulfide bridges. Requires FAD as cofactor.

It localises to the mitochondrion intermembrane space. The catalysed reaction is 2 R'C(R)SH + O2 = R'C(R)S-S(R)CR' + H2O2. FAD-dependent sulfhydryl oxidase that catalyzes disulfide bond formation. Required for the import and folding of small cysteine-containing proteins in the mitochondrial intermembrane space (IMS). Forms a redox cycle with MIA40 that involves a disulfide relay system. Important for maintaining the cysteine residues in MIA40 in an oxidized state. Reduced ERV1 is reoxidized by cytochrome c. Required for the maturation of cytoplasmic, but not of mitochondrial Fe/S proteins. In Saccharomyces cerevisiae (strain ATCC 204508 / S288c) (Baker's yeast), this protein is Mitochondrial FAD-linked sulfhydryl oxidase ERV1 (ERV1).